Consider the following 102-residue polypeptide: MAKQKIRIRLKAYEHRILDQSADKIVETAKRTGATISGPIPLPTERTVYTVLSSPHKFKKAREQFEMRTHKRLIDIVNPTPKTVDSLMKLDLPSGVDIEIKL.

It belongs to the universal ribosomal protein uS10 family. As to quaternary structure, part of the 30S ribosomal subunit.

Involved in the binding of tRNA to the ribosomes. The sequence is that of Small ribosomal subunit protein uS10 from Pediococcus pentosaceus (strain ATCC 25745 / CCUG 21536 / LMG 10740 / 183-1w).